A 128-amino-acid chain; its full sequence is MNFIKEFREFAMRGNVVDMAVGVIIGSAFGKIVSSLVSDIFMPVLGILTGGIDFKDMKFVLAQAQGDVPAVTLNYGLFIQNVIDFIIIAFAIFMMIKVINKVRKPEEKKPVPKAETLLTEIRDLLKNK.

The next 2 helical transmembrane spans lie at 10 to 30 and 76 to 96; these read FAMR…SAFG and GLFI…FMMI.

This sequence belongs to the MscL family. Homopentamer.

The protein localises to the cell inner membrane. Functionally, channel that opens in response to stretch forces in the membrane lipid bilayer. May participate in the regulation of osmotic pressure changes within the cell. The sequence is that of Large-conductance mechanosensitive channel from Haemophilus influenzae (strain PittEE).